The following is a 248-amino-acid chain: PACRG-like protein (248 aa).

An N-acetylmethionine modification is found at M1. Residues 1–29 (MQKSEGSGGTQLKNRATGNYDQRTSSSTQ) show a composition bias toward polar residues. Residues 1 to 71 (MQKSEGSGGT…LNPKTINPFG (71 aa)) are disordered. Low complexity predominate over residues 39-49 (SKSSLSTSSPE). The residue at position 47 (S47) is a Phosphoserine.

This Homo sapiens (Human) protein is PACRG-like protein (PACRGL).